The sequence spans 582 residues: Protein NARROW LEAF 1 (582 aa).

Disordered stretches follow at residues 1–26 (MKPS…VDHQ) and 531–582 (GMSP…DLEK). A compositionally biased stretch (basic and acidic residues) spans 562–572 (LGDREPKRLRS). Positions 567–573 (PKRLRSD) match the Nuclear localization signal motif. Residues 573 to 582 (DSGSSLDLEK) show a composition bias toward low complexity.

As to expression, expressed in leaf sheaths, leaf blades, culms and panicles. Preferentially expressed in vascular tissues in leaves and culms.

It is found in the nucleus. The protein resides in the nucleoplasm. Its subcellular location is the cytoplasm. Involved in the regulation of lateral leaf growth. May be involved in the regulation of basipetal polar auxin transport (PAT) and vascular patterning in leaves. Controls photosynthesis rate by regulating carboxylation efficiency and consequently photosynthesis rate. Controls panicle and spikelet numbers, and grain yield. The polypeptide is Protein NARROW LEAF 1 (Oryza sativa subsp. japonica (Rice)).